The following is a 717-amino-acid chain: Polyribonucleotide nucleotidyltransferase (717 aa).

Residues Asp486 and Asp492 each contribute to the Mg(2+) site. In terms of domain architecture, KH spans 553-612 (PKIVQLQIDIDKISLVIGSTGKTVKAITDEFEVRVQIEQDGRITLFGTDNLKMQKAKAKI). One can recognise an S1 motif domain in the interval 622-715 (GEIYDGIVKK…KFGKIELELA (94 aa)). The segment at 650 to 681 (SNRSRSRDDRYGSDIRHSRYSNRNSRYGRDNR) is disordered. Residues 654 to 666 (RSRDDRYGSDIRH) are compositionally biased toward basic and acidic residues.

It belongs to the polyribonucleotide nucleotidyltransferase family. Requires Mg(2+) as cofactor.

The protein resides in the cytoplasm. The enzyme catalyses RNA(n+1) + phosphate = RNA(n) + a ribonucleoside 5'-diphosphate. Functionally, involved in mRNA degradation. Catalyzes the phosphorolysis of single-stranded polyribonucleotides processively in the 3'- to 5'-direction. The chain is Polyribonucleotide nucleotidyltransferase from Borrelia duttonii (strain Ly).